We begin with the raw amino-acid sequence, 142 residues long: Large ribosomal subunit protein uL11 (142 aa).

Belongs to the universal ribosomal protein uL11 family. In terms of assembly, part of the ribosomal stalk of the 50S ribosomal subunit. Interacts with L10 and the large rRNA to form the base of the stalk. L10 forms an elongated spine to which L12 dimers bind in a sequential fashion forming a multimeric L10(L12)X complex. In terms of processing, one or more lysine residues are methylated.

Its function is as follows. Forms part of the ribosomal stalk which helps the ribosome interact with GTP-bound translation factors. This Idiomarina loihiensis (strain ATCC BAA-735 / DSM 15497 / L2-TR) protein is Large ribosomal subunit protein uL11.